The following is a 280-amino-acid chain: Probable endonuclease 4 (280 aa).

His68, His108, Glu143, Asp177, His180, His214, Asp227, His229, and Glu259 together coordinate Zn(2+).

It belongs to the AP endonuclease 2 family. Zn(2+) is required as a cofactor.

The catalysed reaction is Endonucleolytic cleavage to 5'-phosphooligonucleotide end-products.. Endonuclease IV plays a role in DNA repair. It cleaves phosphodiester bonds at apurinic or apyrimidinic (AP) sites, generating a 3'-hydroxyl group and a 5'-terminal sugar phosphate. The sequence is that of Probable endonuclease 4 from Cenarchaeum symbiosum (strain A).